Reading from the N-terminus, the 186-residue chain is Small ribosomal subunit protein uS5 (186 aa).

An S5 DRBM domain is found at 20-83 (FVDKLVHINR…EAAKRDMIFV (64 aa)).

It belongs to the universal ribosomal protein uS5 family. Part of the 30S ribosomal subunit. Contacts proteins S4 and S8.

With S4 and S12 plays an important role in translational accuracy. Its function is as follows. Located at the back of the 30S subunit body where it stabilizes the conformation of the head with respect to the body. This is Small ribosomal subunit protein uS5 from Brucella ovis (strain ATCC 25840 / 63/290 / NCTC 10512).